Consider the following 406-residue polypeptide: uncharacterized protein (406 aa).

This sequence to S.pombe SpAC12C2.04.

Its subcellular location is the cytoplasm. The protein localises to the nucleus. This is an uncharacterized protein from Schizosaccharomyces pombe (strain 972 / ATCC 24843) (Fission yeast).